A 102-amino-acid polypeptide reads, in one-letter code: NADH-quinone oxidoreductase subunit K (102 aa).

Transmembrane regions (helical) follow at residues 6–26 (LEHGLIVATILFALGFYGVMV), 30–50 (LLFMLMSLEIMMNAAALAFVL), and 62–82 (VMFILILTLAAAEACIGLAIV).

It belongs to the complex I subunit 4L family. NDH-1 is composed of 14 different subunits. Subunits NuoA, H, J, K, L, M, N constitute the membrane sector of the complex.

Its subcellular location is the cell inner membrane. The enzyme catalyses a quinone + NADH + 5 H(+)(in) = a quinol + NAD(+) + 4 H(+)(out). In terms of biological role, NDH-1 shuttles electrons from NADH, via FMN and iron-sulfur (Fe-S) centers, to quinones in the respiratory chain. The immediate electron acceptor for the enzyme in this species is believed to be ubiquinone. Couples the redox reaction to proton translocation (for every two electrons transferred, four hydrogen ions are translocated across the cytoplasmic membrane), and thus conserves the redox energy in a proton gradient. The protein is NADH-quinone oxidoreductase subunit K of Acinetobacter baumannii (strain AB307-0294).